The chain runs to 248 residues: PF03932 family protein CutC (248 aa).

The protein belongs to the CutC family. As to quaternary structure, homodimer.

Its subcellular location is the cytoplasm. The chain is PF03932 family protein CutC from Shigella boydii serotype 18 (strain CDC 3083-94 / BS512).